The chain runs to 288 residues: Aquaporin PIP1-5 (288 aa).

A disordered region spans residues 1 to 36; the sequence is MEGKEEDVRLGANRYSERQPIGTAAQGTEEKDYKEP. 2 helical membrane passes run 57–77 and 92–114; these read IAEF…VMGV and IAWS…SGGH. Residues 116–118 carry the NPA 1 motif; sequence NPA. Transmembrane regions (helical) follow at residues 135–155, 177–197, and 211–231; these read LFYM…VKGF, GDGL…VFSA, and ILAP…TIPI. The short motif at 237 to 239 is the NPA 2 element; sequence NPA. Residues 259 to 279 form a helical membrane-spanning segment; sequence IFWVGPFIGAALAAIYHVVII.

It belongs to the MIP/aquaporin (TC 1.A.8) family. PIP (TC 1.A.8.11) subfamily. In terms of tissue distribution, highly expressed in roots and at lower levels in anthers and silks.

Its subcellular location is the cell membrane. In terms of biological role, water channel required to facilitate the transport of water across cell membrane. The protein is Aquaporin PIP1-5 (PIP1-5) of Zea mays (Maize).